The chain runs to 993 residues: P3N-PIPO polyprotein (993 aa).

In terms of domain architecture, Peptidase S30 spans 154–298 (GVTPYSVQQL…ESTMLSTHHY (145 aa)). Residues His207, Asp216, and Ser249 each act as for P1 proteinase activity in the active site. The short motif at 349-352 (KITC) is the Involved in interaction with stylet and aphid transmission element. Residues 607–609 (PTK) carry the Involved in virions binding and aphid transmission motif. One can recognise a Peptidase C6 domain in the interval 633–755 (MYIAKSGYCY…DSEMKHYRVG (123 aa)). Residues Cys641 and His714 each act as for helper component proteinase activity in the active site.

The protein belongs to the potyviridae P3N-PIPO polyprotein family. In terms of assembly, interacts (via PIPO domain) with host PCaP1 protein; this interaction may help to anchor the movement complex to the plasma membrane from which the complex could move to the plasmodesmata. Post-translationally, potyviral RNA is expressed as two polyproteins which undergo post-translational proteolytic processing. Genome polyprotein is processed by NIa-pro, P1 and HC-pro proteinases resulting in the production of at least ten individual proteins. P3N-PIPO is cleaved by P1 and HC-pro proteinases resulting in the production of three individual proteins. The P1 proteinase and the HC-pro cleave only their respective C-termini autocatalytically.

The protein localises to the host cell junction. It is found in the host plasmodesma. It catalyses the reaction Hydrolyzes a Gly-|-Gly bond at its own C-terminus, commonly in the sequence -Tyr-Xaa-Val-Gly-|-Gly, in the processing of the potyviral polyprotein.. Required for aphid transmission and also has proteolytic activity. Only cleaves a Gly-Gly dipeptide at its own C-terminus. Interacts with virions and aphid stylets. Acts as a suppressor of RNA-mediated gene silencing, also known as post-transcriptional gene silencing (PTGS), a mechanism of plant viral defense that limits the accumulation of viral RNAs. May have RNA-binding activity. In terms of biological role, allows efficient cell to cell propagation, by bypassing the host cell wall barrier. Transports viral genome to neighboring plant cells directly through plasmosdesmata, without any budding. This is P3N-PIPO polyprotein from Solanum betaceum (Tamarillo).